A 199-amino-acid polypeptide reads, in one-letter code: uncharacterized protein (199 aa).

A run of 4 helical transmembrane segments spans residues L40 to L60, V86 to F106, T117 to S137, and F166 to L186.

The protein resides in the membrane. This is an uncharacterized protein from Saccharomyces cerevisiae (strain ATCC 204508 / S288c) (Baker's yeast).